We begin with the raw amino-acid sequence, 553 residues long: Copine-9 (553 aa).

C2 domains are found at residues 1–125 (MSLS…ERPL) and 132–255 (KCGT…FTVY). The Ca(2+) site is built by aspartate 163, aspartate 169, aspartate 225, aspartate 227, and aspartate 233. In terms of domain architecture, VWFA spans 299 to 500 (NFTVAIDFTA…VQFVPFRDYV (202 aa)). A disordered region spans residues 531–553 (TRDIQPRPPPPVSPNPTPAPEQP). A compositionally biased stretch (pro residues) spans 536–553 (PRPPPPVSPNPTPAPEQP).

Belongs to the copine family. The cofactor is Ca(2+).

In terms of biological role, probable calcium-dependent phospholipid-binding protein that may play a role in calcium-mediated intracellular processes. Plays a role in dendrite formation by melanocytes. The sequence is that of Copine-9 from Mus musculus (Mouse).